Consider the following 331-residue polypeptide: Tetraspanin-10 (331 aa).

Residues 1-34 form a disordered region; the sequence is MKEEECSPLLSQDTAGREHPLTRNSPPTANIPCP. The Cytoplasmic portion of the chain corresponds to 1-76; the sequence is MKEEECSPLL…LSTGSNCVKY (76 aa). A helical transmembrane segment spans residues 77-97; it reads LIFLSNFLFSLPSLLALAAGL. Residues 98–120 lie on the Extracellular side of the membrane; sequence WGLTVKRSQGIGWGGPVPTDPML. A helical transmembrane segment spans residues 121 to 141; it reads MLVLGGLVVSVVSLSGCLGAF. Residues 142 to 152 lie on the Cytoplasmic side of the membrane; it reads CENSCLLHWYC. A helical transmembrane segment spans residues 153-173; sequence GAVLFCLALEALAGVLMVTLW. At 174-331 the chain is on the extracellular side; the sequence is KPLQDSLKYT…AAEDIEAGPL (158 aa). Cystine bridges form between C210/C277, C211/C241, C227/C235, and C242/C256. N-linked (GlcNAc...) asparagine glycosylation occurs at N226.

This sequence belongs to the tetraspanin (TM4SF) family. Interacts with ADAM10.

Its subcellular location is the cell membrane. Its function is as follows. Part of TspanC8 subgroup, composed of 6 members that interact with the transmembrane metalloprotease ADAM10. This interaction is required for ADAM10 exit from the endoplasmic reticulum and for enzymatic maturation and trafficking to the cell surface as well as substrate specificity. Different TspanC8/ADAM10 complexes have distinct substrates. The chain is Tetraspanin-10 (Tspan10) from Mus musculus (Mouse).